A 447-amino-acid chain; its full sequence is Glycerol-3-phosphate acyltransferase ATS11, chloroplastic (447 aa).

Positions Met1 to Val21 are disordered. The transit peptide at Met1 to Ser48 directs the protein to the chloroplast. An HXXXXD motif motif is present at residues His217–Asp222.

Belongs to the GPAT/DAPAT family.

Its subcellular location is the plastid. It is found in the chloroplast stroma. The enzyme catalyses a fatty acyl-[ACP] + sn-glycerol 3-phosphate = a 1-acyl-sn-glycero-3-phosphate + holo-[ACP]. The catalysed reaction is sn-glycerol 3-phosphate + an acyl-CoA = a 1-acyl-sn-glycero-3-phosphate + CoA. It functions in the pathway phospholipid metabolism; CDP-diacylglycerol biosynthesis; CDP-diacylglycerol from sn-glycerol 3-phosphate: step 1/3. In terms of biological role, esterifies the acyl-group from acyl-acyl carrier proteins (acyl-ACPs) to the sn-1 position of glycerol-3-phosphate. The physiological acyl donors in chloroplasts are acyl-ACPs, but acyl-CoAs are used as artificial donor for in vitro reactions. The enzyme from chilling-resistant plants discriminates against non-fluid palmitic acid and selects oleic acid whereas the enzyme from sensitive plants accepts both fatty acids. Squash is chilling-sensitive. Preferably utilizes oleoyl groups (18:1-ACP) and has lower affinity to palmitoyl (16:0-ACP) and stearoyl groups (18:0-ACP). The chain is Glycerol-3-phosphate acyltransferase ATS11, chloroplastic from Cucurbita moschata (Winter crookneck squash).